The primary structure comprises 834 residues: MARGERRRRAAAAEGARPLERARAAGRRDGRAGGARGSASGAALAVVVLALAFGLSGRWVLAWLRVRRALTLHPAPSALPPDSSSPAVAPELFWGTYRPHVYFGMKTRSPKPLLTGLMWAQQGATPGTPPKLRHTCEQGDGVGPYGWEFHDGRTFGRQHIHDGALRLTTEFVKRPGGQHGGDWSWRVTVEPQASGTPSFPLVSLFFYVVTDGQEVLLPEIGAKGQLKSISGHTSELGDFRLTLLPPTSPGDTVPKHGSYNVFWSSNPGLPQLTDMVKSRLNSWFQHRPPGASPDRYLGLPGSLKWEERGPSGQGQFLIQQVTLKAPFSVEFVFESGSAATGGNQASGRLVGSQLTQALESHAAAFKERFEKTFQLKEKGLSPEEQALGQVALSGLLGGIGYFYGQGLVLPDTSMEGSEQKMDPALFPPVPLFSGVPSRSFFPRGFLWDEGFHQLVVQRWDPHLTREALGHWLGLLNADGWIGREQILGDEARARVPPEFLVQRAAHANPPTLLLPVVHMLEGHDPDDLAFLRKAFPRLHAWFSWLHQSQAGPVPLSYRWRGRDLALPTLLNPKTLPSGLDDYPRASHPSTAERHLDLRCWVALGARVLSQLAEQLGETEAAAELGPLAASLEEPGSLDELHWAPELGVFADFGNHTKAVQLKSRPPQGLVRVVGRPPPRLQYVDALGYVSLFPLLLQLLDPSSPRLGPLLDVLADSRHLWSPFGLRSLSASSLFYKQRNTEHDPPYWRGAVWLNINYLALGALHHYGHVEGPHKVQAAKLYHELRANVVRNVRQQYQATGFLWEQYSDQDGRGMGCRPFQGWTSLVLLIMAEEY.

A compositionally biased stretch (basic residues) spans 1-10 (MARGERRRRA). The interval 1–37 (MARGERRRRAAAAEGARPLERARAAGRRDGRAGGARG) is disordered. The Cytoplasmic segment spans residues 1–43 (MARGERRRRAAAAEGARPLERARAAGRRDGRAGGARGSASGAA). The Endoplasmic reticulum targeting signature appears at 3-9 (RGERRRR). The span at 17-31 (RPLERARAAGRRDGR) shows a compositional bias: basic and acidic residues. A helical; Signal-anchor for type II membrane protein transmembrane segment spans residues 44 to 64 (LAVVVLALAFGLSGRWVLAWL). At 65–834 (RVRRALTLHP…LVLLIMAEEY (770 aa)) the chain is on the lumenal side. A required for endoplasmic reticulum targeting region spans residues 74 to 136 (PAPSALPPDS…GTPPKLRHTC (63 aa)). Asp580 (proton donor) is an active-site residue. Asn654 carries N-linked (GlcNAc...) asparagine glycosylation. Glu804 functions as the Proton acceptor in the catalytic mechanism.

This sequence belongs to the glycosyl hydrolase 63 family.

It is found in the endoplasmic reticulum membrane. It carries out the reaction N(4)-(alpha-D-Glc-(1-&gt;2)-alpha-D-Glc-(1-&gt;3)-alpha-D-Glc-(1-&gt;3)-alpha-D-Man-(1-&gt;2)-alpha-D-Man-(1-&gt;2)-alpha-D-Man-(1-&gt;3)-[alpha-D-Man-(1-&gt;2)-alpha-D-Man-(1-&gt;3)-[alpha-D-Man-(1-&gt;2)-alpha-D-Man-(1-&gt;6)]-alpha-D-Man-(1-&gt;6)]-beta-D-Man-(1-&gt;4)-beta-D-GlcNAc-(1-&gt;4)-beta-D-GlcNAc)-L-asparaginyl-[protein] + H2O = N(4)-(alpha-D-Glc-(1-&gt;3)-alpha-D-Glc-(1-&gt;3)-alpha-D-Man-(1-&gt;2)-alpha-D-Man-(1-&gt;2)-alpha-D-Man-(1-&gt;3)-[alpha-D-Man-(1-&gt;2)-alpha-D-Man-(1-&gt;3)-[alpha-D-Man-(1-&gt;2)-alpha-D-Man-(1-&gt;6)]-alpha-D-Man-(1-&gt;6)]-beta-D-Man-(1-&gt;4)-beta-D-GlcNAc-(1-&gt;4)-beta-D-GlcNAc)-L-asparaginyl-[protein] + beta-D-glucose. It participates in glycan metabolism; N-glycan degradation. Inhibited by the deoxynojirimycin derivative N-9'-Methoxynonyl-1-Deoxynojirimycin. Its function is as follows. In the context of N-glycan degradation, cleaves the distal alpha 1,2-linked glucose residue from the Glc(3)Man(9)GlcNAc(2) oligosaccharide precursor in a highly specific manner. (Microbial infection) Required for successful influenza or dengue virus infection; inhibition of its activity by a deoxynojirimycin derivative prevents death in mice infected with lethal doses of influenza or dengue viruses, even when administrated after infection. This Mus musculus (Mouse) protein is Mannosyl-oligosaccharide glucosidase.